A 185-amino-acid chain; its full sequence is Ion-translocating oxidoreductase complex subunit B (185 aa).

Residues 1-26 (MNHILLIILIFAALALIFGLLLGFAA) form a hydrophobic region. The 4Fe-4S domain maps to 32-90 (ESDPIVDQLDALLPQTQCGQCGYPGCRPYAEAIANGDSINKCVPGGAQTIQNIADLMGV). Cys49, Cys52, Cys57, Cys73, Cys115, Cys118, Cys121, Cys125, Cys145, Cys148, Cys151, and Cys155 together coordinate [4Fe-4S] cluster. 2 4Fe-4S ferredoxin-type domains span residues 106-135 (RVAF…GAPK) and 136-165 (LMHT…MIEL).

This sequence belongs to the 4Fe4S bacterial-type ferredoxin family. RnfB subfamily. The complex is composed of six subunits: RnfA, RnfB, RnfC, RnfD, RnfE and RnfG. [4Fe-4S] cluster serves as cofactor.

It is found in the cell inner membrane. In terms of biological role, part of a membrane-bound complex that couples electron transfer with translocation of ions across the membrane. The protein is Ion-translocating oxidoreductase complex subunit B of Tolumonas auensis (strain DSM 9187 / NBRC 110442 / TA 4).